Consider the following 404-residue polypeptide: Protein translocase subunit SecF (404 aa).

6 consecutive transmembrane segments (helical) span residues 15-35, 225-245, 246-266, 275-295, 327-347, and 355-375; these read KWYF…SMGA, LLAT…RFEL, IYGI…VGAF, LTVV…TIVV, ILTS…GGEV, and LVIG…PMLV.

The protein belongs to the SecD/SecF family. SecF subfamily. Forms a complex with SecD. Part of the essential Sec protein translocation apparatus which comprises SecA, SecYEG and auxiliary proteins SecDF. Other proteins may also be involved.

It localises to the cell inner membrane. In terms of biological role, part of the Sec protein translocase complex. Interacts with the SecYEG preprotein conducting channel. SecDF uses the proton motive force (PMF) to complete protein translocation after the ATP-dependent function of SecA. The sequence is that of Protein translocase subunit SecF from Koribacter versatilis (strain Ellin345).